We begin with the raw amino-acid sequence, 289 residues long: Thiazole synthase (289 aa).

K132 (schiff-base intermediate with DXP) is an active-site residue. 1-deoxy-D-xylulose 5-phosphate-binding positions include G193, 219–220, and 241–242; these read AG and NT.

This sequence belongs to the ThiG family. In terms of assembly, homotetramer. Forms heterodimers with either ThiH or ThiS.

It localises to the cytoplasm. The catalysed reaction is [ThiS sulfur-carrier protein]-C-terminal-Gly-aminoethanethioate + 2-iminoacetate + 1-deoxy-D-xylulose 5-phosphate = [ThiS sulfur-carrier protein]-C-terminal Gly-Gly + 2-[(2R,5Z)-2-carboxy-4-methylthiazol-5(2H)-ylidene]ethyl phosphate + 2 H2O + H(+). It participates in cofactor biosynthesis; thiamine diphosphate biosynthesis. Its function is as follows. Catalyzes the rearrangement of 1-deoxy-D-xylulose 5-phosphate (DXP) to produce the thiazole phosphate moiety of thiamine. Sulfur is provided by the thiocarboxylate moiety of the carrier protein ThiS. In vitro, sulfur can be provided by H(2)S. This is Thiazole synthase from Rhodospirillum rubrum (strain ATCC 11170 / ATH 1.1.1 / DSM 467 / LMG 4362 / NCIMB 8255 / S1).